The chain runs to 464 residues: Protein FAM90A10 (464 aa).

3 disordered regions span residues 1 to 42 (MMAR…DPRL), 69 to 373 (VPAT…LPTA), and 415 to 437 (HSPE…SEAP). 2 stretches are compositionally biased toward basic and acidic residues: residues 74–89 (GKKE…KPRG) and 97–114 (NKDK…DPQR). Residues 180 to 197 (LASLSPLRKASLSSSSSL) show a composition bias toward low complexity.

It belongs to the FAM90 family.

This is Protein FAM90A10 (FAM90A10) from Homo sapiens (Human).